A 137-amino-acid polypeptide reads, in one-letter code: Ribosome-binding factor A (137 aa).

Belongs to the RbfA family. As to quaternary structure, monomer. Binds 30S ribosomal subunits, but not 50S ribosomal subunits or 70S ribosomes.

The protein localises to the cytoplasm. Functionally, one of several proteins that assist in the late maturation steps of the functional core of the 30S ribosomal subunit. Associates with free 30S ribosomal subunits (but not with 30S subunits that are part of 70S ribosomes or polysomes). Required for efficient processing of 16S rRNA. May interact with the 5'-terminal helix region of 16S rRNA. The sequence is that of Ribosome-binding factor A from Rhodopseudomonas palustris (strain TIE-1).